Here is a 686-residue protein sequence, read N- to C-terminus: Gamma-aminobutyric acid receptor alpha-like (686 aa).

The N-terminal stretch at 1-58 (MCTMPATRDASGSGDASTDLIAARSLSSHQGQRSNLRIFKLLISCCLLMLCIYPNAWP) is a signal peptide. The Extracellular portion of the chain corresponds to 97-393 (SSWLTQSNNH…NFHLQRHMGN (297 aa)). N-linked (GlcNAc...) asparagine glycosylation is present at Asn-108. Cysteines 233 and 247 form a disulfide. The N-linked (GlcNAc...) asparagine glycan is linked to Asn-292. 3 consecutive transmembrane segments (helical) span residues 394–414 (FLIQVYGPCCLLVVLSWVSFW), 424–441 (VSLGITTVLTMTFLGLEA), and 456–476 (FFVFLSFGFIFATILQFAVVH). Residues 477 to 650 (YYTKYGSGEC…YNSVSKIDRA (174 aa)) lie on the Cytoplasmic side of the membrane. The tract at residues 570-641 (KPPRADSDED…RRKGKRTPQY (72 aa)) is disordered. Residues 586 to 596 (QLRANEAPTTS) are compositionally biased toward polar residues. Residues 597-609 (AAAAAAQAAAQAA) show a composition bias toward low complexity. The chain crosses the membrane as a helical span at residues 651–671 (SRIVFPLLFILINVFYWYGYL).

This sequence belongs to the ligand-gated ion channel (TC 1.A.9) family. Gamma-aminobutyric acid receptor (TC 1.A.9.5) subfamily. In terms of assembly, generally pentameric. There are five types of GABA(A) receptor chains: alpha, beta, gamma, delta, and rho. Interacts with Lcch3 (beta chain).

It localises to the postsynaptic cell membrane. The protein localises to the cell membrane. In terms of biological role, GABA, an inhibitory neurotransmitter, mediates neuronal inhibition by binding to the GABA receptor and opening an integral chloride channel. May combine with the ligand-gated ion channel subunit Lcch3 to form cation-selective GABA-gated ion channels. The polypeptide is Gamma-aminobutyric acid receptor alpha-like (Grd) (Drosophila melanogaster (Fruit fly)).